An 88-amino-acid polypeptide reads, in one-letter code: LYR motif-containing protein 2 (88 aa).

Residues 1-19 (MAASRLPPATLTLKQFMRR) constitute a mitochondrion transit peptide.

This sequence belongs to the complex I LYR family.

Its subcellular location is the mitochondrion. In terms of biological role, involved in efficient integration of the N-module into mitochondrial respiratory chain complex I. The protein is LYR motif-containing protein 2 (Lyrm2) of Rattus norvegicus (Rat).